Here is a 513-residue protein sequence, read N- to C-terminus: Pantetheinase (513 aa).

Residues 1 to 21 (MTTQLPAYVAILLFYVSRASC) form the signal peptide. N-linked (GlcNAc...) asparagine glycosylation occurs at Asn-38. Residues 39-306 (ATLTPVSREE…GKLLLSQLDS (268 aa)) form the CN hydrolase domain. Glu-79 (proton acceptor) is an active-site residue. N-linked (GlcNAc...) asparagine glycosylation is present at Asn-130. Residue Lys-178 is the Proton donor of the active site. Asn-200 is a glycosylation site (N-linked (GlcNAc...) asparagine). The Nucleophile role is filled by Cys-211. Asn-283, Asn-315, and Asn-353 each carry an N-linked (GlcNAc...) asparagine glycan. The GPI-anchor amidated glycine moiety is linked to residue Gly-491. A propeptide spans 492-513 (LTAQARIIMLIVIAPIVCSLSW) (removed in mature form).

This sequence belongs to the carbon-nitrogen hydrolase superfamily. BTD/VNN family. As to quaternary structure, monomer. Widely expressed with higher expression in spleen, kidney and blood. Overexpressed in lesional psoriatic skin.

It is found in the cell membrane. It carries out the reaction (R)-pantetheine + H2O = cysteamine + (R)-pantothenate. Its function is as follows. Amidohydrolase that hydrolyzes specifically one of the carboamide linkages in D-pantetheine thus recycling pantothenic acid (vitamin B5) and releasing cysteamine. The polypeptide is Pantetheinase (VNN1) (Homo sapiens (Human)).